The chain runs to 736 residues: DNA topoisomerase 1 (736 aa).

The region spanning Lys-2 to Ile-113 is the Toprim domain. The Mg(2+) site is built by Glu-8 and Asp-82. A Topo IA-type catalytic domain is found at Asp-129–Ile-552. The interval Ser-163–Gln-168 is interaction with DNA. Residue Tyr-297 is the O-(5'-phospho-DNA)-tyrosine intermediate of the active site. 4 C4-type zinc fingers span residues Cys-572–Cys-598, Cys-616–Cys-642, Cys-663–Cys-689, and Cys-702–Cys-725.

It belongs to the type IA topoisomerase family. Monomer. Mg(2+) is required as a cofactor.

The catalysed reaction is ATP-independent breakage of single-stranded DNA, followed by passage and rejoining.. In terms of biological role, releases the supercoiling and torsional tension of DNA, which is introduced during the DNA replication and transcription, by transiently cleaving and rejoining one strand of the DNA duplex. Introduces a single-strand break via transesterification at a target site in duplex DNA. The scissile phosphodiester is attacked by the catalytic tyrosine of the enzyme, resulting in the formation of a DNA-(5'-phosphotyrosyl)-enzyme intermediate and the expulsion of a 3'-OH DNA strand. The free DNA strand then undergoes passage around the unbroken strand, thus removing DNA supercoils. Finally, in the religation step, the DNA 3'-OH attacks the covalent intermediate to expel the active-site tyrosine and restore the DNA phosphodiester backbone. The sequence is that of DNA topoisomerase 1 from Helicobacter pylori (strain J99 / ATCC 700824) (Campylobacter pylori J99).